The sequence spans 203 residues: GTP cyclohydrolase 1 (203 aa).

Zn(2+) is bound by residues cysteine 87, histidine 90, and cysteine 158.

Belongs to the GTP cyclohydrolase I family. Toroid-shaped homodecamer, composed of two pentamers of five dimers.

It carries out the reaction GTP + H2O = 7,8-dihydroneopterin 3'-triphosphate + formate + H(+). The protein operates within cofactor biosynthesis; 7,8-dihydroneopterin triphosphate biosynthesis; 7,8-dihydroneopterin triphosphate from GTP: step 1/1. The polypeptide is GTP cyclohydrolase 1 (Xylella fastidiosa (strain 9a5c)).